Reading from the N-terminus, the 424-residue chain is UPF0229 protein Ping_2705 (424 aa).

Positions 77–108 are disordered; it reads PGNQDFIGGDRIERPPSGGAGGSGSGASDSGK.

Belongs to the UPF0229 family.

This Psychromonas ingrahamii (strain DSM 17664 / CCUG 51855 / 37) protein is UPF0229 protein Ping_2705.